The following is a 462-amino-acid chain: MEKKFFLSFLFLLPFFMILVIAESEEENPDDLIQLGVTRNKIMTAQYECYQKIMQDPVQQTEGIYCNRTWDGWLCWNDVAAGTESMQHCPDYFQDFDPSEKVTKICDQDGNWFRHPASNRTWTNYTQCNVNTHEKVKTALNLFYLTIIGHVLSIASLLISLGIFFYFKSLSCQRITLHKNLFFSFVCNSVITIIHLTAVANNQALVATNPVSCKVSQFIHLYLMGCNYFWMLCEGIYLHTLVVVAVFAEKQHLMWYYFLGWGFPLIPACIHAVARRLYYNDNCWISSDTQLLYIIHGPICAALLVNLFFLLNIVRVLITKLKVTHQAESNLYMKAVRATLILVPLLGIEFVLIPWRPEGKIAEEIYDYIINILMHYQGLLVSTIFCFFNGEVQAILRRNWNQYKIQFGNNFSHSDTLRSASYTVSTISDGTGYSHDCLSEHLNGKSIHDTDNVVIKPEKLYD.

Residues 1-22 (MEKKFFLSFLFLLPFFMILVIA) form the signal peptide. Over 23 to 140 (ESEEENPDDL…NTHEKVKTAL (118 aa)) the chain is Extracellular. 3 disulfides stabilise this stretch: Cys-49-Cys-75, Cys-66-Cys-106, and Cys-89-Cys-128. N-linked (GlcNAc...) asparagine glycans are attached at residues Asn-67, Asn-119, and Asn-124. The helical transmembrane segment at 141 to 165 (NLFYLTIIGHVLSIASLLISLGIFF) threads the bilayer. Residues 166-176 (YFKSLSCQRIT) lie on the Cytoplasmic side of the membrane. The chain crosses the membrane as a helical span at residues 177–199 (LHKNLFFSFVCNSVITIIHLTAV). At 200–210 (ANNQALVATNP) the chain is on the extracellular side. A helical membrane pass occupies residues 211 to 239 (VSCKVSQFIHLYLMGCNYFWMLCEGIYLH). Residues 240 to 253 (TLVVVAVFAEKQHL) are Cytoplasmic-facing. Residues 254 to 274 (MWYYFLGWGFPLIPACIHAVA) traverse the membrane as a helical segment. Residues 275–290 (RRLYYNDNCWISSDTQ) lie on the Extracellular side of the membrane. The tract at residues 289–290 (TQ) is required for RAMP3 interaction. The chain crosses the membrane as a helical span at residues 291 to 315 (LLYIIHGPICAALLVNLFFLLNIVR). The Cytoplasmic segment spans residues 316–330 (VLITKLKVTHQAESN). The helical transmembrane segment at 331-352 (LYMKAVRATLILVPLLGIEFVL) threads the bilayer. The Extracellular segment spans residues 353-367 (IPWRPEGKIAEEIYD). The helical transmembrane segment at 368–388 (YIINILMHYQGLLVSTIFCFF) threads the bilayer. At 389–462 (NGEVQAILRR…VVIKPEKLYD (74 aa)) the chain is on the cytoplasmic side. Phosphoserine is present on residues Ser-421 and Ser-446.

It belongs to the G-protein coupled receptor 2 family. Heterodimer of CALCRL and RAMP1; the receptor complex functions as CGRP receptor. Heterodimer of CALCRL and RAMP2 or CALCRL and RAMP3; the complexes function as adrenomedullin receptor.

It localises to the cell membrane. Its function is as follows. G protein-coupled receptor which specificity is determined by its interaction with receptor-activity-modifying proteins (RAMPs). Together with RAMP1, form the receptor complex for calcitonin-gene-related peptides CALCA/CGRP1 and CALCB/CGRP2. Together with RAMP2 or RAMP3, function as receptor complexes for adrenomedullin (ADM and ADM2). Ligand binding causes a conformation change that triggers signaling via guanine nucleotide-binding proteins (G proteins) and modulates the activity of downstream effectors. Activates cAMP-dependent pathway. This Bos taurus (Bovine) protein is Calcitonin gene-related peptide type 1 receptor (CALCRL).